A 380-amino-acid polypeptide reads, in one-letter code: 1-deoxy-D-xylulose 5-phosphate reductoisomerase (380 aa).

Residues serine 10, glycine 11, serine 12, isoleucine 13, glycine 36, lysine 37, asparagine 38, and asparagine 120 each contribute to the NADPH site. Residue lysine 121 participates in 1-deoxy-D-xylulose 5-phosphate binding. Glutamate 122 is a binding site for NADPH. Aspartate 146 serves as a coordination point for Mn(2+). 1-deoxy-D-xylulose 5-phosphate contacts are provided by serine 147, glutamate 148, serine 172, and histidine 195. Glutamate 148 is a Mn(2+) binding site. Glycine 201 provides a ligand contact to NADPH. The 1-deoxy-D-xylulose 5-phosphate site is built by serine 208, asparagine 213, lysine 214, and glutamate 217. Glutamate 217 provides a ligand contact to Mn(2+).

Belongs to the DXR family. It depends on Mg(2+) as a cofactor. Mn(2+) serves as cofactor.

It carries out the reaction 2-C-methyl-D-erythritol 4-phosphate + NADP(+) = 1-deoxy-D-xylulose 5-phosphate + NADPH + H(+). Its pathway is isoprenoid biosynthesis; isopentenyl diphosphate biosynthesis via DXP pathway; isopentenyl diphosphate from 1-deoxy-D-xylulose 5-phosphate: step 1/6. Catalyzes the NADPH-dependent rearrangement and reduction of 1-deoxy-D-xylulose-5-phosphate (DXP) to 2-C-methyl-D-erythritol 4-phosphate (MEP). This chain is 1-deoxy-D-xylulose 5-phosphate reductoisomerase, found in Bacillus cereus (strain ATCC 10987 / NRS 248).